We begin with the raw amino-acid sequence, 365 residues long: Aminomethyltransferase (365 aa).

The protein belongs to the GcvT family. As to quaternary structure, the glycine cleavage system is composed of four proteins: P, T, L and H.

It carries out the reaction N(6)-[(R)-S(8)-aminomethyldihydrolipoyl]-L-lysyl-[protein] + (6S)-5,6,7,8-tetrahydrofolate = N(6)-[(R)-dihydrolipoyl]-L-lysyl-[protein] + (6R)-5,10-methylene-5,6,7,8-tetrahydrofolate + NH4(+). The glycine cleavage system catalyzes the degradation of glycine. The polypeptide is Aminomethyltransferase (Desulfitobacterium hafniense (strain Y51)).